A 420-amino-acid chain; its full sequence is UDP-N-acetylglucosamine 1-carboxyvinyltransferase (420 aa).

Position 22 to 23 (22 to 23 (KN)) interacts with phosphoenolpyruvate. UDP-N-acetyl-alpha-D-glucosamine is bound at residue Arg-93. Cys-117 (proton donor) is an active-site residue. The residue at position 117 (Cys-117) is a 2-(S-cysteinyl)pyruvic acid O-phosphothioketal. UDP-N-acetyl-alpha-D-glucosamine is bound by residues Asp-307 and Ile-329.

It belongs to the EPSP synthase family. MurA subfamily.

Its subcellular location is the cytoplasm. It catalyses the reaction phosphoenolpyruvate + UDP-N-acetyl-alpha-D-glucosamine = UDP-N-acetyl-3-O-(1-carboxyvinyl)-alpha-D-glucosamine + phosphate. It functions in the pathway cell wall biogenesis; peptidoglycan biosynthesis. Its function is as follows. Cell wall formation. Adds enolpyruvyl to UDP-N-acetylglucosamine. The protein is UDP-N-acetylglucosamine 1-carboxyvinyltransferase of Alteromonas mediterranea (strain DSM 17117 / CIP 110805 / LMG 28347 / Deep ecotype).